A 340-amino-acid polypeptide reads, in one-letter code: Uroporphyrinogen decarboxylase (340 aa).

Substrate contacts are provided by residues 21–25, aspartate 71, tyrosine 147, serine 202, and histidine 316; that span reads RQAGR.

Belongs to the uroporphyrinogen decarboxylase family. Homodimer.

Its subcellular location is the cytoplasm. The enzyme catalyses uroporphyrinogen III + 4 H(+) = coproporphyrinogen III + 4 CO2. It functions in the pathway porphyrin-containing compound metabolism; protoporphyrin-IX biosynthesis; coproporphyrinogen-III from 5-aminolevulinate: step 4/4. Catalyzes the decarboxylation of four acetate groups of uroporphyrinogen-III to yield coproporphyrinogen-III. In Nitratiruptor sp. (strain SB155-2), this protein is Uroporphyrinogen decarboxylase.